A 325-amino-acid chain; its full sequence is Tetraacyldisaccharide 4'-kinase (325 aa).

ATP is bound at residue 55–62; sequence TAGGNGKT.

This sequence belongs to the LpxK family.

The enzyme catalyses a lipid A disaccharide + ATP = a lipid IVA + ADP + H(+). The protein operates within glycolipid biosynthesis; lipid IV(A) biosynthesis; lipid IV(A) from (3R)-3-hydroxytetradecanoyl-[acyl-carrier-protein] and UDP-N-acetyl-alpha-D-glucosamine: step 6/6. Transfers the gamma-phosphate of ATP to the 4'-position of a tetraacyldisaccharide 1-phosphate intermediate (termed DS-1-P) to form tetraacyldisaccharide 1,4'-bis-phosphate (lipid IVA). The sequence is that of Tetraacyldisaccharide 4'-kinase from Salmonella paratyphi A (strain ATCC 9150 / SARB42).